Consider the following 525-residue polypeptide: Cytochrome P450 monooxygenase bsc2 (525 aa).

The helical transmembrane segment at 12 to 32 threads the bilayer; the sequence is SLFILWLTTLLVSVLATAAYI. 2 N-linked (GlcNAc...) asparagine glycosylation sites follow: Asn86 and Asn317. Position 456 (Cys456) interacts with heme.

The protein belongs to the cytochrome P450 family. Heme serves as cofactor.

It is found in the membrane. The protein operates within mycotoxin biosynthesis. Its function is as follows. Cytochrome P450 monooxygenase; part of the gene cluster that mediates the biosynthesis of the diterpene glucoside brassicicene C. In the first step of the brassicicene C biosynthesis, the bifunctional diterpene synthase bsc8 that possesses both prenyl transferase and terpene cyclase activity, converts isopentenyl diphosphate and dimethylallyl diphosphate into geranylgeranyl diphosphate (GGDP) that is further converted into fusicocca-2,10(14)-diene, the first precursor for brassicicene C. Fusicocca-2,10(14)-diene is then substrate of cytochrome P450 monooxygenase bsc1 for hydroxylation at the C-8 position. Oxidation at C-16 position to aldehyde is then catalyzed by the cytochrome P450 monooyxygenase bsc7, yielding fusicocca-2,10(14)-diene-8-beta,16-diol. Follows the isomerization of the double bond and reduction of aldehyde to alcohol catalyzed by the short-chain dehydrogenase/reductase bsc3 to yield the diol compound fusicocca-1,10(14)-diene-8 beta,16-diol. The next step is the oxidation at the C-3 position of fusicocca-2,10(14)-diene-8-beta,16-diol catalyzed by the alpha-ketoglutarate dependent dioxygenase bsc9, to produce a triol compound. Methylation of the hydroxy group at position 16 is performed by the methyltransferase bsc6. 16-O-methylation is followed by oxidation at the C-13 position to ketone and an alkyl shift of the methyl group leads to brassicicene C. Although the probable acetyltransferase bsc4 is included in the gene cluster, no acetylation reactions are necessary for brassicicene C biosynthesis. However, the fact that brassicicene E, which is a structurally related compound having an acetoxy group at position 12, was previously isolated from another strain of A.brassicicola suggests that the ATCC 96836 strain might also produce a small amount of brassicicene E. The protein is Cytochrome P450 monooxygenase bsc2 of Alternaria brassicicola (Dark leaf spot agent).